The primary structure comprises 314 residues: Ketimine reductase mu-crystallin (314 aa).

Arg47 contacts 3,3',5-triiodo-L-thyronine. Positions 82, 92, 119, 144, 146, 147, 168, 169, 170, 173, 205, 206, 226, and 228 each coordinate NADPH. Glu257 provides a ligand contact to 3,3',5-triiodo-L-thyronine. Ser292 provides a ligand contact to NADPH.

The protein belongs to the ornithine cyclodeaminase/mu-crystallin family. In terms of assembly, homodimer. Binds the thyroid hormone triiodothyronine (T3); T3 binding inhibits enzymatic activity. In terms of tissue distribution, expressed in neural tissues, muscle and kidney. Expressed in the inner ear.

The protein resides in the cytoplasm. The catalysed reaction is L-pipecolate + NADP(+) = Delta(1)-piperideine-2-carboxylate + NADPH + H(+). It catalyses the reaction L-pipecolate + NAD(+) = Delta(1)-piperideine-2-carboxylate + NADH + H(+). It carries out the reaction L-proline + NADP(+) = 1-pyrroline-2-carboxylate + NADPH + H(+). The enzyme catalyses L-proline + NAD(+) = 1-pyrroline-2-carboxylate + NADH + H(+). The catalysed reaction is (3R)-1,4-thiomorpholine-3-carboxylate + NAD(+) = 3,4-dehydrothiomorpholine-3-carboxylate + NADH + 2 H(+). It catalyses the reaction (3R)-1,4-thiomorpholine-3-carboxylate + NADP(+) = 3,4-dehydrothiomorpholine-3-carboxylate + NADPH + 2 H(+). It carries out the reaction (S)-cystathionine ketimine + NADH + 2 H(+) = (3R,5S)-2,3,5,6,7-pentahydro-1,4-thiazepine-3,5-dicarboxylate + NAD(+). The enzyme catalyses (S)-cystathionine ketimine + NADPH + 2 H(+) = (3R,5S)-2,3,5,6,7-pentahydro-1,4-thiazepine-3,5-dicarboxylate + NADP(+). The catalysed reaction is (R)-lanthionine ketimine + NADPH + 2 H(+) = (3R,5R)-1,4-thiomorpholine-3,5-dicarboxylate + NADP(+). It catalyses the reaction Delta(2)-thiazoline-2-carboxylate + NADPH + 2 H(+) = L-thiazolidine-2-carboxylate + NADP(+). Its activity is regulated as follows. Inhibited by thyroid hormones triiodothyronine (T3) and thyroxine (T4). Catalyzes the NAD(P)H-dependent reduction of imine double bonds of a number of cyclic ketimine substrates, including sulfur-containing cyclic ketimines. Under physiological conditions, it efficiently catalyzes delta(1)-piperideine-2-carboxylate (P2C) and delta(1)-pyrroline-2-carboxylate (Pyr2C) reduction, suggesting a central role in lysine and glutamate metabolism. Additional substrates are delta(2)-thiazoline-2-carboxylate (T2C), 3,4-dehydrothiomorpholine-3-carboxylate (AECK), and (R)-lanthionine ketimine (LK) that is reduced at very low rate compared to other substrates. Also catalyzes the NAD(P)H-dependent reduction of (S)-cystathionine ketimine (CysK). The polypeptide is Ketimine reductase mu-crystallin (Homo sapiens (Human)).